The sequence spans 319 residues: Glycine--tRNA ligase alpha subunit (319 aa).

Belongs to the class-II aminoacyl-tRNA synthetase family. In terms of assembly, tetramer of two alpha and two beta subunits.

It is found in the cytoplasm. It carries out the reaction tRNA(Gly) + glycine + ATP = glycyl-tRNA(Gly) + AMP + diphosphate. In Oenococcus oeni (strain ATCC BAA-331 / PSU-1), this protein is Glycine--tRNA ligase alpha subunit.